A 638-amino-acid polypeptide reads, in one-letter code: Probable potassium transport system protein Kup (638 aa).

The disordered stretch occupies residues 1 to 20; sequence MQVEHEVATEGGQAPASSGH. 12 helical membrane-spanning segments follow: residues 24–44, 67–87, 115–135, 153–173, 181–201, 228–248, 263–283, 301–321, 353–373, 382–402, 413–433, and 435–455; these read IAGLAVAAIGVVYGDIGTSPL, ILSLVFWALVTVVSAKYVVFI, AWWLSVLGVFGAALFYGDGMI, PAFKPFVIPIALVVLVGLFVM, VGAIFGPVMVCWFLVLAVLGI, LIGWLALGAVVLAITGGEALY, WFSLVFPALYLNYLGQGALIL, LVYPMVGMATLATIIASQAVI, IYVPGVNWMLLGAVVALVVGF, AYGIAVTLTMMIDTVLAFVVV, AVLFLVVFLAVDIAFFSATTV, and IFAGGWFPLLIGAAIFTLLRT.

It belongs to the HAK/KUP transporter (TC 2.A.72) family.

The protein resides in the cell inner membrane. The catalysed reaction is K(+)(in) + H(+)(in) = K(+)(out) + H(+)(out). Functionally, transport of potassium into the cell. Likely operates as a K(+):H(+) symporter. The chain is Probable potassium transport system protein Kup from Azoarcus sp. (strain BH72).